Consider the following 264-residue polypeptide: Putative serine carboxypeptidase-like 53 (264 aa).

The first 23 residues, 1-23 (MGKLQDWSITTCLFLFFLHASQT), serve as a signal peptide directing secretion. 4 N-linked (GlcNAc...) asparagine glycosylation sites follow: Asn-65, Asn-101, Asn-153, and Asn-184.

It belongs to the peptidase S10 family.

It is found in the secreted. The chain is Putative serine carboxypeptidase-like 53 (SCPL53) from Arabidopsis thaliana (Mouse-ear cress).